The sequence spans 140 residues: Oocyte-expressed protein homolog (140 aa).

The KH; atypical domain occupies 40–101; it reads PLVFFLEAWL…AVQRQVKSVL (62 aa).

This sequence belongs to the KHDC1 family. Component of the subcortical maternal complex (SCMC), at least composed of NLRP5, KHDC3, OOEP, and TLE6. Within the complex, interacts with NLRP5, KHDC3 and TLE6. As part of the SCMC interacts with the SCMC-associated protein NLRP4F. The SCMC may facilitate translocation of its components between the nuclear and cytoplasmic compartments. Forms a scaffold complex with KHDC3/FILIA, and interacts with BLM and TRIM25 at DNA replication forks.

It is found in the cytoplasm. Its subcellular location is the nucleus. Functionally, component of the subcortical maternal complex (SCMC), a multiprotein complex that plays a key role in early embryonic development. The SCMC complex is a structural constituent of cytoplasmic lattices, which consist in fibrous structures found in the cytoplasm of oocytes and preimplantation embryos. They are required to store maternal proteins critical for embryonic development, such as proteins that control epigenetic reprogramming of the preimplantation embryo, and prevent their degradation or activation. As part of the OOEP-KHDC3 scaffold, recruits BLM and TRIM25 to DNA replication forks, thereby promoting the ubiquitination of BLM by TRIM25, enhancing BLM retainment at replication forks and therefore promoting stalled replication fork restart. Positively regulates the homologous recombination-mediated DNA double-strand break (DSB) repair pathway by regulating ATM activation and RAD51 recruitment to DSBs in oocytes. Thereby contributes to oocyte survival and the resumption and completion of meiosis. The protein is Oocyte-expressed protein homolog (OOEP) of Bos taurus (Bovine).